We begin with the raw amino-acid sequence, 233 residues long: Coenzyme Q-binding protein COQ10 homolog, mitochondrial (233 aa).

The transit peptide at 1 to 34 (MAEKATSLFLRAMEISEKQSFDVMRRNSSCTIRH) directs the protein to the mitochondrion.

The protein belongs to the COQ10 family. Interacts with coenzyme Q.

It is found in the mitochondrion inner membrane. Functionally, required for the function of coenzyme Q in the respiratory chain. May serve as a chaperone or may be involved in the transport of Q6 from its site of synthesis to the catalytic sites of the respiratory complexes. This is Coenzyme Q-binding protein COQ10 homolog, mitochondrial from Danio rerio (Zebrafish).